The following is a 152-amino-acid chain: MAPKAEKKPAEKKPAAGEEKSAEKAPAGKKPKAEKRLPASKASSKEGGAGDKKGRKKAKKSVETYKIYIFKVLKQVHPDIGISSKAMSIMNSFINDIFEKLAQEAARLARYNKKPTITSREIQTSVRLVLPGELAKHAVSEGTKAVTKFTSN.

Basic and acidic residues predominate over residues 1–23 (MAPKAEKKPAEKKPAAGEEKSAE). The disordered stretch occupies residues 1–60 (MAPKAEKKPAEKKPAAGEEKSAEKAPAGKKPKAEKRLPASKASSKEGGAGDKKGRKKAKK). N6-acetyllysine occurs at positions 7 and 35. A Glycyl lysine isopeptide (Lys-Gly) (interchain with G-Cter in ubiquitin) cross-link involves residue lysine 148.

It belongs to the histone H2B family. In terms of assembly, the nucleosome is a histone octamer containing two molecules each of H2A, H2B, H3 and H4 assembled in one H3-H4 heterotetramer and two H2A-H2B heterodimers. The octamer wraps approximately 147 bp of DNA. In terms of processing, can be acetylated to form H2BK6ac and H2BK33ac. Monoubiquitinated by BRE1 to form H2BK143ub1 and deubiquitinated by UBP26. Required for heterochromatic histone H3 di- and trimethylation at H3K4me. May give a specific tag for epigenetic transcriptional activation.

Its subcellular location is the nucleus. The protein localises to the chromosome. Core component of nucleosome. Nucleosomes wrap and compact DNA into chromatin, limiting DNA accessibility to the cellular machineries which require DNA as a template. Histones thereby play a central role in transcription regulation, DNA repair, DNA replication and chromosomal stability. DNA accessibility is regulated via a complex set of post-translational modifications of histones, also called histone code, and nucleosome remodeling. The protein is Histone H2B.1 of Oryza sativa subsp. indica (Rice).